We begin with the raw amino-acid sequence, 293 residues long: Energy-coupling factor transporter ATP-binding protein EcfA2 (293 aa).

In terms of domain architecture, ABC transporter spans 3 to 246 (ITFQKVEHRY…ADELEKIGVD (244 aa)). 40-47 (GHTGSGKS) serves as a coordination point for ATP.

This sequence belongs to the ABC transporter superfamily. Energy-coupling factor EcfA family. In terms of assembly, forms a stable energy-coupling factor (ECF) transporter complex composed of 2 membrane-embedded substrate-binding proteins (S component), 2 ATP-binding proteins (A component) and 2 transmembrane proteins (T component).

The protein localises to the cell membrane. ATP-binding (A) component of a common energy-coupling factor (ECF) ABC-transporter complex. Unlike classic ABC transporters this ECF transporter provides the energy necessary to transport a number of different substrates. The protein is Energy-coupling factor transporter ATP-binding protein EcfA2 of Bacillus cereus (strain ATCC 10987 / NRS 248).